We begin with the raw amino-acid sequence, 260 residues long: Hemin import ATP-binding protein HmuV (260 aa).

One can recognise an ABC transporter domain in the interval leucine 6–arginine 242. Glycine 38–serine 45 lines the ATP pocket.

It belongs to the ABC transporter superfamily. Heme (hemin) importer (TC 3.A.1.14.5) family. The complex is composed of two ATP-binding proteins (HmuV), two transmembrane proteins (HmuU) and a solute-binding protein (HmuT).

The protein localises to the cell inner membrane. Functionally, part of the ABC transporter complex HmuTUV involved in hemin import. Responsible for energy coupling to the transport system. The sequence is that of Hemin import ATP-binding protein HmuV from Vibrio parahaemolyticus serotype O3:K6 (strain RIMD 2210633).